Here is a 209-residue protein sequence, read N- to C-terminus: Pyridoxine/pyridoxamine 5'-phosphate oxidase (209 aa).

Residues 57-62 (RMVLLK), 72-73 (YT), Lys79, and Gln101 contribute to the FMN site. Lys62 is a substrate binding site. Substrate is bound by residues Tyr119, Arg123, and Ser127. FMN contacts are provided by residues 136-137 (QS) and Trp181. 187–189 (RLH) contacts substrate. Residue Arg191 participates in FMN binding.

Belongs to the pyridoxamine 5'-phosphate oxidase family. Homodimer. It depends on FMN as a cofactor.

It catalyses the reaction pyridoxamine 5'-phosphate + O2 + H2O = pyridoxal 5'-phosphate + H2O2 + NH4(+). It carries out the reaction pyridoxine 5'-phosphate + O2 = pyridoxal 5'-phosphate + H2O2. Its pathway is cofactor metabolism; pyridoxal 5'-phosphate salvage; pyridoxal 5'-phosphate from pyridoxamine 5'-phosphate: step 1/1. It functions in the pathway cofactor metabolism; pyridoxal 5'-phosphate salvage; pyridoxal 5'-phosphate from pyridoxine 5'-phosphate: step 1/1. Functionally, catalyzes the oxidation of either pyridoxine 5'-phosphate (PNP) or pyridoxamine 5'-phosphate (PMP) into pyridoxal 5'-phosphate (PLP). The protein is Pyridoxine/pyridoxamine 5'-phosphate oxidase of Chelativorans sp. (strain BNC1).